Here is a 4655-residue protein sequence, read N- to C-terminus: Low-density lipoprotein receptor-related protein 2 (4655 aa).

The first 25 residues, 1-25 (MDRGPAAVACTLLLALVACLAPASG), serve as a signal peptide directing secretion. The Extracellular segment spans residues 26 to 4423 (QECDSAHFRC…FSKGISPGTT (4398 aa)). 7 consecutive LDL-receptor class A domains span residues 27-63 (ECDS…IGCA), 66-104 (TCQQ…QDCS), 107-143 (TCSS…NDCQ), 146-180 (TCEQ…INCT), 182-218 (ICLH…HACN), 221-257 (TCGG…DGCE), and 265-308 (KCSP…KYCS). 21 disulfide bridges follow: Cys28–Cys40, Cys35–Cys53, Cys47–Cys62, Cys67–Cys80, Cys74–Cys93, Cys87–Cys103, Cys108–Cys120, Cys115–Cys133, Cys127–Cys142, Cys147–Cys157, Cys152–Cys170, Cys164–Cys179, Cys183–Cys195, Cys190–Cys208, Cys202–Cys217, Cys222–Cys234, Cys229–Cys247, Cys241–Cys256, Cys266–Cys279, Cys273–Cys292, and Cys286–Cys307. N-linked (GlcNAc...) asparagine glycans are attached at residues Asn159 and Asn178. N-linked (GlcNAc...) asparagine glycosylation is found at Asn299, Asn300, Asn341, Asn388, and Asn463. LDL-receptor class B repeat units follow at residues 436-478 (QRVF…DWVN), 479-521 (NKIY…DPTV), 522-568 (GYLF…DMIS), 569-613 (KRVY…FEGQ), 753-795 (STIF…DWIS), 796-837 (KNLY…HPFA), 838-881 (GYLF…DWAA), and 882-925 (SRLY…FGEH). Asn866 carries N-linked (GlcNAc...) asparagine glycosylation. One can recognise an LDL-receptor class A 8 domain in the interval 1025–1061 (QCGLFSFPCKNGRCVPNYYLCDGVDDCHDNSDEQLCG). Disulfide bonds link Cys1026–Cys1038, Cys1033–Cys1051, and Cys1045–Cys1060. Residue Asn1064 is glycosylated (N-linked (GlcNAc...) asparagine). 7 consecutive LDL-receptor class A domains span residues 1066–1102 (TCSS…HNCP), 1108–1144 (SCLD…KNCN), 1148–1184 (TCQP…VGCV), 1186–1223 (NCTA…AGCP), 1229–1267 (MCHS…NACV), 1270–1306 (TCPS…KDCP), and 1304–1349 (DCPT…PLCN). Intrachain disulfides connect Cys1067-Cys1079, Cys1074-Cys1092, Cys1086-Cys1101, Cys1109-Cys1121, Cys1116-Cys1134, and Cys1128-Cys1143. Ca(2+) contacts are provided by Trp1126, Asp1129, Asp1131, Asp1133, Asp1139, and Glu1140. Asn1144 carries N-linked (GlcNAc...) asparagine glycosylation. Disulfide bonds link Cys1149–Cys1161, Cys1156–Cys1174, and Cys1168–Cys1183. N-linked (GlcNAc...) asparagine glycosylation occurs at Asn1186. 12 cysteine pairs are disulfide-bonded: Cys1187–Cys1200, Cys1194–Cys1213, Cys1207–Cys1222, Cys1230–Cys1243, Cys1237–Cys1256, Cys1250–Cys1266, Cys1271–Cys1283, Cys1278–Cys1296, Cys1290–Cys1305, Cys1305–Cys1325, Cys1312–Cys1338, and Cys1332–Cys1348. Positions 1208, 1210, 1212, 1218, and 1219 each coordinate Ca(2+). Residues Asn1327, Asn1340, and Asn1383 are each glycosylated (N-linked (GlcNAc...) asparagine). The EGF-like 1; calcium-binding domain occupies 1390–1429 (DIDECDILGSCSQHCYNMRGSFRCSCDTGYMLESDGRTCK). Intrachain disulfides connect Cys1394–Cys1404, Cys1400–Cys1413, and Cys1415–Cys1428. Residues Asn1464, Asn1496, and Asn1550 are each glycosylated (N-linked (GlcNAc...) asparagine). LDL-receptor class B repeat units lie at residues 1478–1520 (GRIF…DWVG), 1521–1563 (RNLY…DPRM), 1566–1609 (HLLF…DYPN), 1610–1654 (RLLY…FEDS), and 1655–1695 (VYWT…VHPS). N-linked (GlcNAc...) asparagine glycosylation is present at Asn1675. Residues 1700-1741 (SVNPCAFSRCSHLCLLSSQGPHFYSCVCPSGWSLSPDLLNCL) form the EGF-like 2 domain. 3 disulfide bridges follow: Cys1704-Cys1713, Cys1709-Cys1725, and Cys1727-Cys1740. 5 LDL-receptor class B repeats span residues 1790-1832 (QYIY…DWIS), 1833-1882 (RNLY…DPAR), 1883-1930 (GKLY…DIEE), 1931-1972 (QKLY…HDSF), and 1973-2013 (LYYT…YHRR). Residue Asn1810 is glycosylated (N-linked (GlcNAc...) asparagine). Asn2055 carries an N-linked (GlcNAc...) asparagine glycan. LDL-receptor class B repeat units follow at residues 2107 to 2156 (GFIY…DWVA), 2157 to 2201 (GNLY…DPKN), 2202 to 2245 (RYLF…DRSD), 2246 to 2289 (GYVY…FENS), 2431 to 2477 (DRIY…DWIT), 2478 to 2518 (RRIY…DPCQ), 2519 to 2562 (GYLY…DYEE), 2563 to 2604 (DLLY…YGQY), and 2605 to 2646 (IYWT…VVKN). Residues Asn2177 and Asn2224 are each glycosylated (N-linked (GlcNAc...) asparagine). Asn2499 and Asn2547 each carry an N-linked (GlcNAc...) asparagine glycan. LDL-receptor class A domains are found at residues 2699 to 2737 (RCGA…SVCA), 2740 to 2776 (TCSP…AGCL), 2779 to 2818 (DCNA…KNCP), 2821 to 2860 (TCQS…TYCT), 2863 to 2900 (TCSS…ASCG), 2905 to 2944 (TCLA…HQCQ), 2947 to 2989 (NCSD…QNCT), 2992 to 3028 (TCSE…RGCL), 3031 to 3069 (TCQQ…HLCH), and 3074 to 3110 (TCPP…KGCG). Intrachain disulfides connect Cys2700-Cys2712, Cys2707-Cys2725, Cys2719-Cys2736, Cys2741-Cys2753, Cys2748-Cys2766, Cys2760-Cys2775, Cys2780-Cys2793, Cys2788-Cys2806, Cys2800-Cys2817, Cys2822-Cys2835, Cys2829-Cys2848, Cys2842-Cys2859, Cys2864-Cys2876, Cys2871-Cys2889, Cys2883-Cys2899, Cys2906-Cys2918, Cys2913-Cys2931, and Cys2925-Cys2943. A glycan (N-linked (GlcNAc...) asparagine) is linked at Asn2781. Residues Asn2809 and Asn2810 are each glycosylated (N-linked (GlcNAc...) asparagine). A glycan (N-linked (GlcNAc...) asparagine) is linked at Asn2947. 18 disulfides stabilise this stretch: Cys2948/Cys2965, Cys2955/Cys2978, Cys2972/Cys2988, Cys2993/Cys3005, Cys3000/Cys3018, Cys3012/Cys3027, Cys3032/Cys3044, Cys3039/Cys3057, Cys3051/Cys3068, Cys3075/Cys3087, Cys3082/Cys3100, Cys3094/Cys3109, Cys3114/Cys3126, Cys3122/Cys3135, Cys3137/Cys3150, Cys3156/Cys3167, Cys3163/Cys3176, and Cys3178/Cys3191. A glycan (N-linked (GlcNAc...) asparagine) is linked at Asn2987. An EGF-like 3 domain is found at 3110 to 3151 (GINECHDPSISGCDHNCTDTLTSFYCSCRPGYKLMSDKRTCV). Residue Asn3125 is glycosylated (N-linked (GlcNAc...) asparagine). The EGF-like 4; calcium-binding domain occupies 3152 to 3192 (DIDECTEMPFVCSQKCENVIGSYICKCAPGYLREPDGKTCR). N-linked (GlcNAc...) asparagine glycans are attached at residues Asn3211, Asn3257, Asn3315, and Asn3355. LDL-receptor class B repeat units follow at residues 3239–3281 (KRLY…DWVS), 3282–3324 (RKLY…DNPR), 3333–3376 (GYLY…DYTN), 3377–3419 (DLLY…FEDT), and 3420–3460 (IYWT…YHPY). The N-linked (GlcNAc...) asparagine glycan is linked to Asn3446. 11 LDL-receptor class A domains span residues 3511 to 3549 (MCSS…ALCP), 3552 to 3590 (FCRL…LLCE), 3593 to 3631 (HCDS…SHCA), 3634 to 3672 (TCRP…EECM), 3677 to 3715 (LCDN…QGCE), 3718 to 3755 (TCHP…ENCA), 3758 to 3794 (ECTE…RDCE), 3797 to 3833 (TCHP…ADCP), 3841 to 3879 (YCQA…HLCL), 3882 to 3921 (PCNS…EHCR), and 3927 to 3963 (PCTE…LGCN). Disulfide bonds link Cys3512–Cys3525, Cys3519–Cys3538, Cys3532–Cys3548, Cys3553–Cys3565, Cys3560–Cys3578, Cys3572–Cys3589, Cys3594–Cys3606, Cys3601–Cys3619, Cys3613–Cys3630, Cys3635–Cys3647, Cys3642–Cys3660, Cys3654–Cys3671, Cys3678–Cys3692, Cys3686–Cys3705, Cys3699–Cys3714, Cys3719–Cys3732, Cys3727–Cys3745, Cys3739–Cys3754, Cys3759–Cys3771, Cys3766–Cys3784, Cys3778–Cys3793, Cys3798–Cys3810, Cys3805–Cys3823, Cys3817–Cys3832, Cys3842–Cys3854, Cys3849–Cys3867, Cys3861–Cys3878, Cys3883–Cys3896, Cys3891–Cys3909, Cys3903–Cys3920, Cys3928–Cys3940, Cys3935–Cys3953, and Cys3947–Cys3962. Asn3564 carries N-linked (GlcNAc...) asparagine glycosylation. Asn3680 is a glycosylation site (N-linked (GlcNAc...) asparagine). Asn3978 is a glycosylation site (N-linked (GlcNAc...) asparagine). The region spanning 4007 to 4048 (DINECEQFGTCPQHCRNTKGSYECVCADGFTSMSDRPGKRCA) is the EGF-like 5; calcium-binding domain. 3 disulfides stabilise this stretch: Cys4011/Cys4021, Cys4017/Cys4030, and Cys4032/Cys4047. An N-linked (GlcNAc...) asparagine glycan is attached at Asn4068. LDL-receptor class B repeat units follow at residues 4154 to 4196 (RHIY…NPKL), 4197 to 4240 (GLMF…DYLN), and 4242 to 4283 (DRIY…FEDQ). A glycan (N-linked (GlcNAc...) asparagine) is linked at Asn4327. The region spanning 4377–4411 (LPPPCRCMHGGNCYFDETDLPKCKCPSGYTGKYCE) is the EGF-like 6 domain. 3 disulfide bridges follow: Cys4381–Cys4389, Cys4383–Cys4399, and Cys4401–Cys4410. The chain crosses the membrane as a helical span at residues 4424-4446 (AVAVLLTILLIVVIGALAIAGFF). Residues 4447–4655 (HYRRTGSLLP…ANLVKEDSEV (209 aa)) lie on the Cytoplasmic side of the membrane. Residues 4453 to 4462 (SLLPALPKLP) carry the SH3-binding motif. The short motif at 4456–4461 (PALPKL) is the PxLPxI/L motif 1; mediates interaction with ANKRA2 element. The short motif at 4459-4464 (PKLPSL) is the PxLPxI/L motif 2; mediates interaction with ANKRA2 element. A phosphoserine mark is found at Ser4463 and Ser4466. The short motif at 4521 to 4526 (FENPMY) is the Endocytosis signal element. The interval 4550–4574 (KNYGSPINPSEIVPETNPTSPAADG) is disordered. Over residues 4565 to 4574 (TNPTSPAADG) the composition is skewed to polar residues. Ser4569 carries the post-translational modification Phosphoserine. An interaction with DAB2 region spans residues 4589–4602 (QTTNFENPIYAQME). An NPXY motif motif is present at residues 4595–4598 (NPIY). An SH2-binding motif is present at residues 4598–4601 (YAQM). Positions 4601–4655 (MENEQKESVAATPPPSPSLPAKPKPPSRRDPTPTYSATEDTFKDTANLVKEDSEV) are disordered. An SH3-binding motif is present at residues 4611–4622 (ATPPPSPSLPAK). A compositionally biased stretch (pro residues) spans 4612-4624 (TPPPSPSLPAKPK). Ser4616 carries the phosphoserine modification. At Thr4632 the chain carries Phosphothreonine. The residue at position 4653 (Ser4653) is a Phosphoserine.

The protein belongs to the LDLR family. In terms of assembly, binds plasminogen, extracellular matrix components, plasminogen activator-plasminogen activator inhibitor type I complex, apolipoprotein E-enriched beta-VLDL, lipoprotein lipase, lactoferrin, CLU/clusterin and calcium. Forms a multimeric complex together with LRPAP1. Interacts (via PxLPxI/L motif) with ANKRA2 (via ankyrin repeats). Interacts with LRP2BP. Interacts (via NPXY motif) with DAB2; the interaction is not affected by tyrosine phosphorylation of the NPXY motif. Interacts with MB. Interacts with BMP4. Interacts with the Sonic hedgehog protein N-product which is the active product of SHH. Interacts with CST3 in a calcium-dependent manner. Interacts with the vitamin-D binding protein GC/DBP. Interacts with sex hormone-binding protein SHBG. Interacts with angiotensin-2. Also interacts with angiotensin 1-7. Interacts with APOM. Interacts with selenoprotein SEPP1. Interacts with LEP. Interacts with ALB. Interacts with the antiapoptotic protein BIRC5/survivin. Interacts with matrix metalloproteinase MMP2 in complex with metalloproteinase inhibitor TIMP1. In neurons, forms a trimeric complex with APP and APPB1/FE65. Interacts with LDLRAP1/ARH; mediates trafficking of LRP2 to the endocytic recycling compartment. Does not interact with beta-amyloid protein 40 alone but interacts with the complex composed of beta-amyloid protein 40 and CLU/APOJ. Interacts with MDK. A fraction undergoes proteolytic cleavage of the extracellular domain at the cell membrane to generate a cytoplasmic tail fragment. This is internalized into the early endosome from where it trafficks in an LDLRAP1/ARH-dependent manner to the endocytic recycling compartment (ERC). In the ERC, it is further cleaved by gamma-secretase to release a fragment which translocates to the nucleus and mediates transcriptional repression. Post-translationally, N-glycosylation is required for ligand binding. As to expression, expressed in first and third trimester cytotrophoblasts in the placenta (at protein level). Absorptive epithelia, including renal proximal tubules.

It localises to the apical cell membrane. It is found in the endosome lumen. Its subcellular location is the membrane. The protein localises to the coated pit. The protein resides in the cell projection. It localises to the dendrite. It is found in the axon. Functionally, multiligand endocytic receptor. Acts together with CUBN to mediate endocytosis of high-density lipoproteins. Mediates receptor-mediated uptake of polybasic drugs such as aprotinin, aminoglycosides and polymyxin B. In the kidney, mediates the tubular uptake and clearance of leptin. Also mediates transport of leptin across the blood-brain barrier through endocytosis at the choroid plexus epithelium. Endocytosis of leptin in neuronal cells is required for hypothalamic leptin signaling and leptin-mediated regulation of feeding and body weight. Mediates endocytosis and subsequent lysosomal degradation of CST3 in kidney proximal tubule cells. Mediates renal uptake of 25-hydroxyvitamin D3 in complex with the vitamin D3 transporter GC/DBP. Mediates renal uptake of metallothionein-bound heavy metals. Together with CUBN, mediates renal reabsorption of myoglobin. Mediates renal uptake and subsequent lysosomal degradation of APOM. Plays a role in kidney selenium homeostasis by mediating renal endocytosis of selenoprotein SEPP1. Mediates renal uptake of the antiapoptotic protein BIRC5/survivin which may be important for functional integrity of the kidney. Mediates renal uptake of matrix metalloproteinase MMP2 in complex with metalloproteinase inhibitor TIMP1. Mediates endocytosis of Sonic hedgehog protein N-product (ShhN), the active product of SHH. Also mediates ShhN transcytosis. In the embryonic neuroepithelium, mediates endocytic uptake and degradation of BMP4, is required for correct SHH localization in the ventral neural tube and plays a role in patterning of the ventral telencephalon. Required at the onset of neurulation to sequester SHH on the apical surface of neuroepithelial cells of the rostral diencephalon ventral midline and to control PTCH1-dependent uptake and intracellular trafficking of SHH. During neurulation, required in neuroepithelial cells for uptake of folate bound to the folate receptor FOLR1 which is necessary for neural tube closure. In the adult brain, negatively regulates BMP signaling in the subependymal zone which enables neurogenesis to proceed. In astrocytes, mediates endocytosis of ALB which is required for the synthesis of the neurotrophic factor oleic acid. Involved in neurite branching. During optic nerve development, required for SHH-mediated migration and proliferation of oligodendrocyte precursor cells. Mediates endocytic uptake and clearance of SHH in the retinal margin which protects retinal progenitor cells from mitogenic stimuli and keeps them quiescent. Plays a role in reproductive organ development by mediating uptake in reproductive tissues of androgen and estrogen bound to the sex hormone binding protein SHBG. Mediates endocytosis of angiotensin-2. Also mediates endocytosis of angiotensis 1-7. Binds to the complex composed of beta-amyloid protein 40 and CLU/APOJ and mediates its endocytosis and lysosomal degradation. Required for embryonic heart development. Required for normal hearing, possibly through interaction with estrogen in the inner ear. This is Low-density lipoprotein receptor-related protein 2 from Homo sapiens (Human).